The primary structure comprises 222 residues: N-acetyltransferase 8 (222 aa).

The Cytoplasmic segment spans residues 1-35 (MASFHIRQFQERDYEQVVDMFSRGMKEHIPTAFRH). A helical; Signal-anchor for type II membrane protein membrane pass occupies residues 36-56 (LLLLPRTLLLLLGVPLALVLV). Topologically, residues 57-222 (SGSWLLAVVC…IHFIYPLPSS (166 aa)) are lumenal. Residues 62-217 (LAVVCIFFLL…VDVSLIHFIY (156 aa)) form the N-acetyltransferase domain.

It belongs to the NAT8 family.

It localises to the endoplasmic reticulum-Golgi intermediate compartment membrane. Its subcellular location is the endoplasmic reticulum membrane. It catalyses the reaction L-lysyl-[protein] + acetyl-CoA = N(6)-acetyl-L-lysyl-[protein] + CoA + H(+). It carries out the reaction an S-substituted L-cysteine + acetyl-CoA = an N-acetyl-L-cysteine-S-conjugate + CoA + H(+). The protein operates within sulfur metabolism; glutathione metabolism. Its function is as follows. Endoplasmic reticulum-membrane(ER)-bound lysine N-acetyltransferase catalyzing the N6-acetylation of lysine residues in the lumen of the ER in various proteins, including PROM1 and BACE1, using acetyl-CoA as acetyl donor. Thereby, may regulate apoptosis through the acetylation and the regulation of the expression of PROM1. May also regulate amyloid beta-peptide secretion through acetylation of BACE1 and the regulation of its expression in neurons. N(6)-lysine acetylation in the ER maintains protein homeostasis and regulates reticulophagy. Alternatively, acetylates the free alpha-amino group of cysteine S-conjugates to form mercapturic acids. This is the final step in a major route for detoxification of a wide variety of reactive electrophiles which starts with their incorporation into glutathione S-conjugates. The glutathione S-conjugates are then further processed into cysteine S-conjugates and finally mercapturic acids which are water soluble and can be readily excreted in urine or bile. This is N-acetyltransferase 8 (Nat8) from Rattus norvegicus (Rat).